Reading from the N-terminus, the 100-residue chain is Urease subunit gamma (100 aa).

This sequence belongs to the urease gamma subunit family. As to quaternary structure, heterotrimer of UreA (gamma), UreB (beta) and UreC (alpha) subunits. Three heterotrimers associate to form the active enzyme.

It is found in the cytoplasm. It catalyses the reaction urea + 2 H2O + H(+) = hydrogencarbonate + 2 NH4(+). Its pathway is nitrogen metabolism; urea degradation; CO(2) and NH(3) from urea (urease route): step 1/1. In Mycolicibacterium gilvum (strain PYR-GCK) (Mycobacterium gilvum (strain PYR-GCK)), this protein is Urease subunit gamma.